Here is a 574-residue protein sequence, read N- to C-terminus: Phosphatidylinositol 4-kinase gamma 3 (574 aa).

2 consecutive Ubiquitin-like domains span residues 32 to 109 (PILV…SDLQ) and 110 to 188 (AISV…AKVR). Residues 257 to 555 (GNGPIRSSDG…IVPTETTEDE (299 aa)) enclose the PI3K/PI4K catalytic domain. Residues 263 to 269 (SSDGSGG) are G-loop. ATP contacts are provided by residues 264 to 270 (SDGSGGA), Lys286, and 381 to 384 (QMFV). Positions 414-422 (ANADRHAGN) are catalytic loop. The tract at residues 438–464 (PIDHGYCFPNKFEDCTFEWLYWPQAKE) is activation loop. Asp440 is a binding site for ATP.

The protein belongs to the PI3/PI4-kinase family. Type II PI4K subfamily.

The enzyme catalyses a 1,2-diacyl-sn-glycero-3-phospho-(1D-myo-inositol) + ATP = a 1,2-diacyl-sn-glycero-3-phospho-(1D-myo-inositol 4-phosphate) + ADP + H(+). Its function is as follows. The phosphorylation of phosphatidylinositol (PI) to PI4P is the first committed step in the generation of phosphatidylinositol 4,5-bisphosphate (PIP2), a precursor of the second messenger inositol 1,4,5-trisphosphate (InsP3). This chain is Phosphatidylinositol 4-kinase gamma 3 (PI4KG3), found in Arabidopsis thaliana (Mouse-ear cress).